The primary structure comprises 787 residues: Ribonucleoside-diphosphate reductase large subunit (787 aa).

Substrate is bound by residues Thr-209, 224–225 (SC), Gly-255, 436–440 (NLCTE), and 618–622 (PTVSS). Cys-225 and Cys-453 are joined by a disulfide. Asn-436 (proton acceptor) is an active-site residue. Cys-438 (cysteine radical intermediate) is an active-site residue. Glu-440 (proton acceptor) is an active-site residue.

This sequence belongs to the ribonucleoside diphosphate reductase large chain family. In terms of assembly, heterotetramer composed of a homodimer of the large subunit (R1) and a homodimer of the small subunit (R2). Larger multisubunit protein complex are also active, composed of (R1)n(R2)n.

It carries out the reaction a 2'-deoxyribonucleoside 5'-diphosphate + [thioredoxin]-disulfide + H2O = a ribonucleoside 5'-diphosphate + [thioredoxin]-dithiol. Ribonucleoside-diphosphate reductase holoenzyme provides the precursors necessary for viral DNA synthesis. Allows virus growth in non-dividing cells, as well as reactivation from latency in infected hosts. Catalyzes the biosynthesis of deoxyribonucleotides from the corresponding ribonucleotides. The protein is Ribonucleoside-diphosphate reductase large subunit of Bos taurus (Bovine).